The primary structure comprises 348 residues: Fructose-1,6-bisphosphatase class 1 (348 aa).

The Mg(2+) site is built by Glu-107, Asp-129, Ile-131, and Asp-132. Residues 132–135 (DGSS), Asn-224, Tyr-252, and Lys-282 each bind substrate. A Mg(2+)-binding site is contributed by Glu-288.

Belongs to the FBPase class 1 family. Homotetramer. Mg(2+) serves as cofactor.

The protein resides in the cytoplasm. It catalyses the reaction beta-D-fructose 1,6-bisphosphate + H2O = beta-D-fructose 6-phosphate + phosphate. It functions in the pathway carbohydrate biosynthesis; Calvin cycle. The chain is Fructose-1,6-bisphosphatase class 1 from Microcystis aeruginosa (strain NIES-843 / IAM M-2473).